Consider the following 237-residue polypeptide: RNA-binding protein 38 (237 aa).

The interval 1 to 24 is disordered; the sequence is MLLQPACSPSVFPRPSAAPSAMHG. Positions 32–109 constitute an RRM domain; the sequence is TKIFVGGLPY…RKANVNLAYL (78 aa).

This sequence belongs to the RBM38 family. As to expression, expressed in cardiac and skeletal muscle tissues.

It localises to the cytoplasm. Its subcellular location is the cytosol. It is found in the nucleus. RNA-binding protein that specifically bind the 3'-UTR of CDKN1A transcripts, leading to maintain the stability of CDKN1A transcripts, thereby acting as a mediator of the p53/TP53 family to regulate CDKN1A. CDKN1A is a cyclin-dependent kinase inhibitor transcriptionally regulated by the p53/TP53 family to induce cell cycle arrest. Has the ability to induce cell cycle arrest in G1 and maintain the stability of CDKN1A transcripts induced by p53/TP53. Also acts as a mRNA splicing factor. Specifically regulates the expression of FGFR2-IIIb, an epithelial cell-specific isoform of FGFR2. Plays a role in myogenic differentiation. In Mus musculus (Mouse), this protein is RNA-binding protein 38 (Rbm38).